Here is a 118-residue protein sequence, read N- to C-terminus: Large ribosomal subunit protein bL20 (118 aa).

The protein belongs to the bacterial ribosomal protein bL20 family.

Its function is as follows. Binds directly to 23S ribosomal RNA and is necessary for the in vitro assembly process of the 50S ribosomal subunit. It is not involved in the protein synthesizing functions of that subunit. The chain is Large ribosomal subunit protein bL20 from Lactobacillus johnsonii (strain CNCM I-12250 / La1 / NCC 533).